A 417-amino-acid polypeptide reads, in one-letter code: Serine hydroxymethyltransferase (417 aa).

(6S)-5,6,7,8-tetrahydrofolate-binding positions include leucine 122 and 126-128 (GHL). The residue at position 230 (lysine 230) is an N6-(pyridoxal phosphate)lysine. 355–357 (SPF) contributes to the (6S)-5,6,7,8-tetrahydrofolate binding site.

It belongs to the SHMT family. Homodimer. Pyridoxal 5'-phosphate serves as cofactor.

The protein resides in the cytoplasm. The enzyme catalyses (6R)-5,10-methylene-5,6,7,8-tetrahydrofolate + glycine + H2O = (6S)-5,6,7,8-tetrahydrofolate + L-serine. The protein operates within one-carbon metabolism; tetrahydrofolate interconversion. It functions in the pathway amino-acid biosynthesis; glycine biosynthesis; glycine from L-serine: step 1/1. Catalyzes the reversible interconversion of serine and glycine with tetrahydrofolate (THF) serving as the one-carbon carrier. This reaction serves as the major source of one-carbon groups required for the biosynthesis of purines, thymidylate, methionine, and other important biomolecules. Also exhibits THF-independent aldolase activity toward beta-hydroxyamino acids, producing glycine and aldehydes, via a retro-aldol mechanism. This chain is Serine hydroxymethyltransferase, found in Francisella tularensis subsp. novicida (strain U112).